We begin with the raw amino-acid sequence, 65 residues long: Large ribosomal subunit protein bL35 (65 aa).

A disordered region spans residues 20-42 (GKVRRHHANASHIMTTKTTKRKR).

It belongs to the bacterial ribosomal protein bL35 family.

The polypeptide is Large ribosomal subunit protein bL35 (Syntrophus aciditrophicus (strain SB)).